The sequence spans 463 residues: L-seryl-tRNA(Sec) selenium transferase (463 aa).

Lys-295 carries the N6-(pyridoxal phosphate)lysine modification.

It belongs to the SelA family. Homodecamer; pentamer of dimers. Binds only one seryl-tRNA(Sec) per dimer. The cofactor is pyridoxal 5'-phosphate.

The protein resides in the cytoplasm. The catalysed reaction is L-seryl-tRNA(Sec) + selenophosphate + H(+) = L-selenocysteinyl-tRNA(Sec) + phosphate. The protein operates within aminoacyl-tRNA biosynthesis; selenocysteinyl-tRNA(Sec) biosynthesis; selenocysteinyl-tRNA(Sec) from L-seryl-tRNA(Sec) (bacterial route): step 1/1. Functionally, converts seryl-tRNA(Sec) to selenocysteinyl-tRNA(Sec) required for selenoprotein biosynthesis. In Salmonella paratyphi B (strain ATCC BAA-1250 / SPB7), this protein is L-seryl-tRNA(Sec) selenium transferase.